The following is a 361-amino-acid chain: Phosphoserine aminotransferase (361 aa).

Ser-9 and Arg-42 together coordinate L-glutamate. Residues 76–77 (AR), Trp-103, Thr-153, Asp-173, and Gln-196 contribute to the pyridoxal 5'-phosphate site. The residue at position 197 (Lys-197) is an N6-(pyridoxal phosphate)lysine. 238–239 (NT) is a pyridoxal 5'-phosphate binding site.

Belongs to the class-V pyridoxal-phosphate-dependent aminotransferase family. SerC subfamily. In terms of assembly, homodimer. Pyridoxal 5'-phosphate serves as cofactor.

The protein localises to the cytoplasm. The catalysed reaction is O-phospho-L-serine + 2-oxoglutarate = 3-phosphooxypyruvate + L-glutamate. It carries out the reaction 4-(phosphooxy)-L-threonine + 2-oxoglutarate = (R)-3-hydroxy-2-oxo-4-phosphooxybutanoate + L-glutamate. It functions in the pathway amino-acid biosynthesis; L-serine biosynthesis; L-serine from 3-phospho-D-glycerate: step 2/3. The protein operates within cofactor biosynthesis; pyridoxine 5'-phosphate biosynthesis; pyridoxine 5'-phosphate from D-erythrose 4-phosphate: step 3/5. In terms of biological role, catalyzes the reversible conversion of 3-phosphohydroxypyruvate to phosphoserine and of 3-hydroxy-2-oxo-4-phosphonooxybutanoate to phosphohydroxythreonine. This is Phosphoserine aminotransferase from Wigglesworthia glossinidia brevipalpis.